The primary structure comprises 220 residues: Cell division protein SepF (220 aa).

The interval 33–82 is disordered; sequence GAARGYARRPREDRFEEEGYIDRAGREYDDRPAPREYDEPPIYRGGYDEP. Residues 52-70 are compositionally biased toward basic and acidic residues; sequence YIDRAGREYDDRPAPREYD.

The protein belongs to the SepF family. Homodimer. Interacts with FtsZ.

The protein resides in the cytoplasm. Cell division protein that is part of the divisome complex and is recruited early to the Z-ring. Probably stimulates Z-ring formation, perhaps through the cross-linking of FtsZ protofilaments. Its function overlaps with FtsA. The sequence is that of Cell division protein SepF from Mycobacterium sp. (strain JLS).